The following is a 558-amino-acid chain: Poly(A) polymerase PAPalpha (558 aa).

Polar residues predominate over residues 1 to 17; that stretch reads MNTKTYGVTEPISTNGP. Residues 1-20 are disordered; sequence MNTKTYGVTEPISTNGPTPK. Residues 86–88, 99–101, aspartate 153, lysine 214, tyrosine 223, and 232–233 contribute to the ATP site; these read FGS, DID, and GV. 3 residues coordinate Mg(2+): aspartate 99, aspartate 101, and aspartate 153. The segment at 516-558 is disordered; sequence VYEDGEERPKKSGKKRKKVIKEDGQKRVRNESPASSASVNGSS. A compositionally biased stretch (basic and acidic residues) spans 535–545; that stretch reads IKEDGQKRVRN. The segment covering 547–558 has biased composition (low complexity); the sequence is SPASSASVNGSS.

The protein belongs to the poly(A) polymerase family. Mg(2+) serves as cofactor. The cofactor is Mn(2+).

It localises to the nucleus. It catalyses the reaction RNA(n) + ATP = RNA(n)-3'-adenine ribonucleotide + diphosphate. Its function is as follows. Polymerase that creates the 3'-poly(A) tail of mRNA's. May acquire specificity through interaction with a cleavage and polyadenylation factor. This Candida albicans (strain SC5314 / ATCC MYA-2876) (Yeast) protein is Poly(A) polymerase PAPalpha (PAPALPHA).